Reading from the N-terminus, the 399-residue chain is S-adenosylmethionine synthase (399 aa).

Residue His-15 coordinates ATP. Residue Asp-17 participates in Mg(2+) binding. Position 43 (Glu-43) interacts with K(+). Residues Glu-56 and Gln-99 each contribute to the L-methionine site. The segment at 99 to 109 (QSPDIAGGVDH) is flexible loop. Residues 175-177 (DAK), 242-243 (RF), Asp-251, 257-258 (RK), Ala-274, and Lys-278 each bind ATP. Position 251 (Asp-251) interacts with L-methionine. Lys-282 is an L-methionine binding site.

The protein belongs to the AdoMet synthase family. As to quaternary structure, homotetramer; dimer of dimers. Mg(2+) serves as cofactor. The cofactor is K(+).

Its subcellular location is the cytoplasm. It carries out the reaction L-methionine + ATP + H2O = S-adenosyl-L-methionine + phosphate + diphosphate. It functions in the pathway amino-acid biosynthesis; S-adenosyl-L-methionine biosynthesis; S-adenosyl-L-methionine from L-methionine: step 1/1. Its function is as follows. Catalyzes the formation of S-adenosylmethionine (AdoMet) from methionine and ATP. The overall synthetic reaction is composed of two sequential steps, AdoMet formation and the subsequent tripolyphosphate hydrolysis which occurs prior to release of AdoMet from the enzyme. The chain is S-adenosylmethionine synthase from Lactobacillus helveticus (strain DPC 4571).